Consider the following 85-residue polypeptide: Large ribosomal subunit protein bL27 (85 aa).

This sequence belongs to the bacterial ribosomal protein bL27 family.

The polypeptide is Large ribosomal subunit protein bL27 (Mycobacteroides abscessus (strain ATCC 19977 / DSM 44196 / CCUG 20993 / CIP 104536 / JCM 13569 / NCTC 13031 / TMC 1543 / L948) (Mycobacterium abscessus)).